A 220-amino-acid chain; its full sequence is MNEQDKMKAAAARKAIDYVPEGAIIGVGTGSTANFFIDELARIKDRIEGAVASSQATADRLKAIGIQVFDLNGVGELPVYVDGCDEINHYLHMIKGGGGALTREKIVATSSRQFICIADESKLVKRLGAFPLPVEVIPMARSLVARKLVKLGGHPEWRENFVTDNGNLILDVHDLAIDQPLEMEETINRMAGVVTCGLFARRRADVLLLGRSDGTVQTIE.

Residues 29–32, 82–85, and 95–98 contribute to the substrate site; these read TGST, DGCD, and KGGG. The Proton acceptor role is filled by glutamate 104. Lysine 122 is a binding site for substrate.

It belongs to the ribose 5-phosphate isomerase family. As to quaternary structure, homodimer.

The enzyme catalyses aldehydo-D-ribose 5-phosphate = D-ribulose 5-phosphate. It participates in carbohydrate degradation; pentose phosphate pathway; D-ribose 5-phosphate from D-ribulose 5-phosphate (non-oxidative stage): step 1/1. Catalyzes the reversible conversion of ribose-5-phosphate to ribulose 5-phosphate. This Laribacter hongkongensis (strain HLHK9) protein is Ribose-5-phosphate isomerase A.